The chain runs to 267 residues: Translation initiation factor 2 subunit alpha (267 aa).

Positions 12–83 (GEYVIATVKE…RRKTVDVSLK (72 aa)) constitute an S1 motif domain.

This sequence belongs to the eIF-2-alpha family. As to quaternary structure, heterotrimer composed of an alpha, a beta and a gamma chain.

Its function is as follows. eIF-2 functions in the early steps of protein synthesis by forming a ternary complex with GTP and initiator tRNA. This Staphylothermus marinus (strain ATCC 43588 / DSM 3639 / JCM 9404 / F1) protein is Translation initiation factor 2 subunit alpha.